Consider the following 265-residue polypeptide: Beta-lactamase SHV-4 (265 aa).

Ser45 serves as the catalytic Acyl-ester intermediate. The cysteines at positions 52 and 98 are disulfide-linked. Residue Glu143 is the Proton acceptor of the active site. A substrate-binding site is contributed by 209–211; it reads KTG.

This sequence belongs to the class-A beta-lactamase family.

The enzyme catalyses a beta-lactam + H2O = a substituted beta-amino acid. Its function is as follows. SHV enzymes hydrolyze broad spectrum cephalosporins notably cefotaxime and ceftazidime. SHV-4 causes particularly high levels of resistance to aztreonam and ceftazidime. The chain is Beta-lactamase SHV-4 (bla) from Klebsiella pneumoniae.